The sequence spans 240 residues: Ubiquinone biosynthesis O-methyltransferase (240 aa).

Residues Arg-44, Gly-64, Asp-85, and Met-129 each contribute to the S-adenosyl-L-methionine site.

This sequence belongs to the methyltransferase superfamily. UbiG/COQ3 family.

It catalyses the reaction a 3-demethylubiquinol + S-adenosyl-L-methionine = a ubiquinol + S-adenosyl-L-homocysteine + H(+). The enzyme catalyses a 3-(all-trans-polyprenyl)benzene-1,2-diol + S-adenosyl-L-methionine = a 2-methoxy-6-(all-trans-polyprenyl)phenol + S-adenosyl-L-homocysteine + H(+). Its pathway is cofactor biosynthesis; ubiquinone biosynthesis. In terms of biological role, O-methyltransferase that catalyzes the 2 O-methylation steps in the ubiquinone biosynthetic pathway. The polypeptide is Ubiquinone biosynthesis O-methyltransferase (Escherichia coli (strain SMS-3-5 / SECEC)).